Consider the following 111-residue polypeptide: High mobility group protein Z (111 aa).

A DNA-binding region (HMG box) is located at residues 6-72; the sequence is PKRPLSAYML…EYNKAVKEYE (67 aa). Ser-11 is modified (phosphoserine). Residues 72–111 are disordered; the sequence is EANGGTDSGAPKKRKKAAAKPAKKAKKKESSEEEEEDESE. The span at 82–98 shows a compositional bias: basic residues; sequence PKKRKKAAAKPAKKAKK. Residues 102-111 show a composition bias toward acidic residues; sequence SEEEEEDESE.

It belongs to the HMGB family.

The protein localises to the nucleus. It localises to the chromosome. The polypeptide is High mobility group protein Z (HmgZ) (Drosophila melanogaster (Fruit fly)).